The sequence spans 181 residues: MSSAIASRRYAVALLEVAVEGNFLEKVTEDLQKIQEVLSGSHELVLALKSPLINVDLKSKILEEIFRNKVDEKTMVFIKLLAHKKRAALLAGVISEFNALIDERNGVINADVKSAIKLSDEQAKELVNSLSVRTGKKIRAKMRLDENLIGGVTVKIGDTIIDGSISHQLEMLRHSLVAQPA.

The protein belongs to the ATPase delta chain family. In terms of assembly, F-type ATPases have 2 components, F(1) - the catalytic core - and F(0) - the membrane proton channel. F(1) has five subunits: alpha(3), beta(3), gamma(1), delta(1), epsilon(1). F(0) has three main subunits: a(1), b(2) and c(10-14). The alpha and beta chains form an alternating ring which encloses part of the gamma chain. F(1) is attached to F(0) by a central stalk formed by the gamma and epsilon chains, while a peripheral stalk is formed by the delta and b chains.

It localises to the cell inner membrane. In terms of biological role, f(1)F(0) ATP synthase produces ATP from ADP in the presence of a proton or sodium gradient. F-type ATPases consist of two structural domains, F(1) containing the extramembraneous catalytic core and F(0) containing the membrane proton channel, linked together by a central stalk and a peripheral stalk. During catalysis, ATP synthesis in the catalytic domain of F(1) is coupled via a rotary mechanism of the central stalk subunits to proton translocation. This protein is part of the stalk that links CF(0) to CF(1). It either transmits conformational changes from CF(0) to CF(1) or is implicated in proton conduction. In Chlorobaculum tepidum (strain ATCC 49652 / DSM 12025 / NBRC 103806 / TLS) (Chlorobium tepidum), this protein is ATP synthase subunit delta.